Consider the following 538-residue polypeptide: Sodium/hydrogen exchanger 1 (538 aa).

Residues 1–19 are Cytoplasmic-facing; the sequence is MLDSLVSKLPSLSTSDHAS. A helical membrane pass occupies residues 20–40; the sequence is VVALNLFVALLCACIVLGHLL. Residues 41–45 lie on the Vacuolar side of the membrane; the sequence is EENRW. A helical transmembrane segment spans residues 46 to 66; it reads MNESITALLIGLGTGVTILLI. At 67 to 73 the chain is on the cytoplasmic side; that stretch reads SKGKSSH. Residues 74–94 constitute an intramembrane region (helical); it reads LLVFSEDLFFIYLLPPIIFNA. The Cytoplasmic portion of the chain corresponds to 95 to 106; sequence GFQVKKKQFFRN. A helical membrane pass occupies residues 107–127; it reads FVTIMLFGAVGTIISCTIISL. Residues 128 to 146 are Vacuolar-facing; sequence GVTQFFKKLDIGTFDLGDY. Intramembrane regions (helical) lie at residues 147–166 and 172–192; these read LAIGAIFAATDSVCTLQVLN and LLYSLVFGEGVVNDATSVVVF. Over 193–216 the chain is Vacuolar; that stretch reads NAIQSFDLTHLNHEAAFHLLGNFL. A helical transmembrane segment spans residues 217-237; sequence YLFLLSTLLGAATGLISAYVI. The Cytoplasmic portion of the chain corresponds to 238-262; the sequence is KKLYFGRHSTDREVALMMLMAYLSY. A helical transmembrane segment spans residues 263-283; sequence MLAELFDLSGILTVFFCGIVM. Residues 284-302 lie on the Vacuolar side of the membrane; that stretch reads SHYTWHNVTESSRITTKHT. N-linked (GlcNAc...) asparagine glycosylation occurs at Asn290. The chain crosses the membrane as a helical span at residues 303 to 323; the sequence is FATLSFLAETFIFLYVGMDAL. Over 324–342 the chain is Cytoplasmic; it reads DIDKWRSVSDTPGTSIAVS. The helical transmembrane segment at 343–363 threads the bilayer; the sequence is SILMGLVMVGRAAFVFPLSFL. Topologically, residues 364 to 378 are vacuolar; that stretch reads SNLAKKNQSEKINFN. Asn370 is a glycosylation site (N-linked (GlcNAc...) asparagine). A helical transmembrane segment spans residues 379 to 399; the sequence is MQVVIWWSGLMRGAVSMALAY. Residues 400 to 413 lie on the Cytoplasmic side of the membrane; sequence NKFTRAGHTDVRGN. A helical transmembrane segment spans residues 414-434; the sequence is AIMITSTITVCLFSTVVFGML. Residues 435–538 are Vacuolar-facing; it reads TKPLISYLLP…ERNPPDLSKA (104 aa). N-linked (GlcNAc...) asparagine glycosylation occurs at Asn447. The interaction with CML18/CAM15 stretch occupies residues 496 to 518; that stretch reads RTVHYYWRQFDDSFMRPVFGGRG.

This sequence belongs to the monovalent cation:proton antiporter 1 (CPA1) transporter (TC 2.A.36) family. In terms of assembly, calcium and pH-dependent interaction with CML18/CAM15 (increases when pH decreases, better at pH 5.5 than at pH 7.5). As to expression, ubiquitous, with higher levels around vascular tissues and guard cells.

It is found in the vacuole membrane. Its subcellular location is the endoplasmic reticulum membrane. The protein resides in the golgi apparatus membrane. The enzyme catalyses Na(+)(in) + H(+)(out) = Na(+)(out) + H(+)(in). The catalysed reaction is K(+)(in) + H(+)(out) = K(+)(out) + H(+)(in). Its function is as follows. Acts in low affinity electroneutral exchange of protons for cations such as Na(+) or K(+) across membranes. Can also exchange Li(+) and Cs(+) with a lower affinity. Involved in vacuolar ion compartmentalization necessary for cell volume regulation and cytoplasmic Na(+) detoxification. Required during leaves expansion, probably to stimulate epidermal cell expansion. Confers competence to grow in high salinity conditions. This Arabidopsis thaliana (Mouse-ear cress) protein is Sodium/hydrogen exchanger 1 (NHX1).